A 99-amino-acid chain; its full sequence is Aspartyl/glutamyl-tRNA(Asn/Gln) amidotransferase subunit C (99 aa).

The protein belongs to the GatC family. As to quaternary structure, heterotrimer of A, B and C subunits.

It carries out the reaction L-glutamyl-tRNA(Gln) + L-glutamine + ATP + H2O = L-glutaminyl-tRNA(Gln) + L-glutamate + ADP + phosphate + H(+). The catalysed reaction is L-aspartyl-tRNA(Asn) + L-glutamine + ATP + H2O = L-asparaginyl-tRNA(Asn) + L-glutamate + ADP + phosphate + 2 H(+). In terms of biological role, allows the formation of correctly charged Asn-tRNA(Asn) or Gln-tRNA(Gln) through the transamidation of misacylated Asp-tRNA(Asn) or Glu-tRNA(Gln) in organisms which lack either or both of asparaginyl-tRNA or glutaminyl-tRNA synthetases. The reaction takes place in the presence of glutamine and ATP through an activated phospho-Asp-tRNA(Asn) or phospho-Glu-tRNA(Gln). This chain is Aspartyl/glutamyl-tRNA(Asn/Gln) amidotransferase subunit C, found in Solibacter usitatus (strain Ellin6076).